The primary structure comprises 116 residues: Flagellar transcriptional regulator FlhD (116 aa).

The protein belongs to the FlhD family. As to quaternary structure, homodimer; disulfide-linked. Forms a heterohexamer composed of two FlhC and four FlhD subunits. Each FlhC binds a FlhD dimer, forming a heterotrimer, and a hexamer assembles by dimerization of two heterotrimers.

The protein localises to the cytoplasm. Functionally, functions in complex with FlhC as a master transcriptional regulator that regulates transcription of several flagellar and non-flagellar operons by binding to their promoter region. Activates expression of class 2 flagellar genes, including fliA, which is a flagellum-specific sigma factor that turns on the class 3 genes. Also regulates genes whose products function in a variety of physiological pathways. The protein is Flagellar transcriptional regulator FlhD of Pectobacterium carotovorum subsp. carotovorum (strain PC1).